An 818-amino-acid polypeptide reads, in one-letter code: Glycerol-3-phosphate acyltransferase (818 aa).

Positions 308-313 match the HXXXXD motif motif; it reads CHRSHM.

It belongs to the GPAT/DAPAT family.

The protein localises to the cell inner membrane. The catalysed reaction is sn-glycerol 3-phosphate + an acyl-CoA = a 1-acyl-sn-glycero-3-phosphate + CoA. The protein operates within phospholipid metabolism; CDP-diacylglycerol biosynthesis; CDP-diacylglycerol from sn-glycerol 3-phosphate: step 1/3. This is Glycerol-3-phosphate acyltransferase from Alteromonas mediterranea (strain DSM 17117 / CIP 110805 / LMG 28347 / Deep ecotype).